A 233-amino-acid polypeptide reads, in one-letter code: Type IV secretion system protein PtlE homolog (233 aa).

A helical transmembrane segment spans residues 42–62; sequence VAWAALAVTALSLIAIATMLP.

This sequence belongs to the virB8 family.

It localises to the cell inner membrane. The polypeptide is Type IV secretion system protein PtlE homolog (ptlE) (Bordetella parapertussis (strain 12822 / ATCC BAA-587 / NCTC 13253)).